The chain runs to 77 residues: uncharacterized protein (77 aa).

This sequence to E.coli YdfK.

This is an uncharacterized protein from Escherichia coli (strain K12).